The sequence spans 341 residues: Phenylalanine--tRNA ligase alpha subunit (341 aa).

Glu-254 is a binding site for Mg(2+).

It belongs to the class-II aminoacyl-tRNA synthetase family. Phe-tRNA synthetase alpha subunit type 1 subfamily. As to quaternary structure, tetramer of two alpha and two beta subunits. Requires Mg(2+) as cofactor.

It is found in the cytoplasm. The catalysed reaction is tRNA(Phe) + L-phenylalanine + ATP = L-phenylalanyl-tRNA(Phe) + AMP + diphosphate + H(+). The polypeptide is Phenylalanine--tRNA ligase alpha subunit (pheS) (Mycoplasma genitalium (strain ATCC 33530 / DSM 19775 / NCTC 10195 / G37) (Mycoplasmoides genitalium)).